We begin with the raw amino-acid sequence, 333 residues long: Homeobox protein engrailed-1 (333 aa).

A compositionally biased stretch (basic and acidic residues) spans 1–14 (MEEPPEGHGHHRDA). Disordered regions lie at residues 1-184 (MEEP…AAKY) and 226-247 (RPSS…DKRP). The segment covering 20-31 (ANGGGGGGGGSD) has biased composition (gly residues). A compositionally biased stretch (pro residues) spans 38-66 (SPSPAPASPAAPCPLPLPRRRPPPPPPPR). A compositionally biased stretch (gly residues) spans 94-104 (TGAGGGGGGGG). Residues 144–173 (DGSAPAGTAAKANPGTAAGAAGAAGAAKAQ) are compositionally biased toward low complexity. A DNA-binding region (homeobox) is located at residues 244–303 (DKRPRTAFTAEQLQRLKAEFQANRYITEQRRQSLAQELSLNESRVKIWFQNKRAKIKKAT).

The protein belongs to the engrailed homeobox family.

The protein localises to the nucleus. In terms of biological role, required for proper formation of the apical ectodermal ridge and correct dorsal-ventral patterning in the limb. The sequence is that of Homeobox protein engrailed-1 (EN1) from Gallus gallus (Chicken).